Reading from the N-terminus, the 204-residue chain is MTPPGRLYLLRVRSAPVLLLLGLLLGLPPGAQGFPGVGISPSAARTAYQHPQKHFIQGTLKPAAHLIGDPSIQNSLRWRANTDRAFLRHGFSLSNNSLLVPTSGLYFVYSQVVFSGEGCFPKATPTPLYLAHEVQLFSSQYPFHVPLLSAQKSVCPGPQGPWVRSVYQGAVFLLTQGDQLSTHTDGISHLLLSPSSVFFGAFAL.

An N-terminal signal peptide occupies residues 1 to 33; sequence MTPPGRLYLLRVRSAPVLLLLGLLLGLPPGAQG. The THD domain occupies 62–204; sequence PAAHLIGDPS…SSVFFGAFAL (143 aa). Residue asparagine 95 is glycosylated (N-linked (GlcNAc...) asparagine). A disulfide bridge connects residues cysteine 119 and cysteine 155.

Belongs to the tumor necrosis factor family. As to quaternary structure, homotrimer, and heterotrimer of either two LTB and one LTA subunits or (less prevalent) two LTA and one LTB subunits. Interacts with TNFRSF14.

The protein resides in the secreted. The protein localises to the membrane. Cytokine that in its homotrimeric form binds to TNFRSF1A/TNFR1, TNFRSF1B/TNFBR and TNFRSF14/HVEM. In its heterotrimeric form with LTB binds to TNFRSF3/LTBR. Lymphotoxin is produced by lymphocytes and is cytotoxic for a wide range of tumor cells in vitro and in vivo. The chain is Lymphotoxin-alpha (LTA) from Canis lupus familiaris (Dog).